A 153-amino-acid chain; its full sequence is Endoribonuclease YbeY (153 aa).

Positions 113, 117, and 123 each coordinate Zn(2+).

The protein belongs to the endoribonuclease YbeY family. It depends on Zn(2+) as a cofactor.

It localises to the cytoplasm. In terms of biological role, single strand-specific metallo-endoribonuclease involved in late-stage 70S ribosome quality control and in maturation of the 3' terminus of the 16S rRNA. This Aliivibrio fischeri (strain MJ11) (Vibrio fischeri) protein is Endoribonuclease YbeY.